The primary structure comprises 1923 residues: Callose synthase 5 (1923 aa).

Over residues 1–10 (MAQSSTSHDS) the composition is skewed to polar residues. A disordered region spans residues 1–22 (MAQSSTSHDSGPQGLMRRPSRS). The Cytoplasmic portion of the chain corresponds to 1-481 (MAQSSTSHDS…ETRTFWHIYH (481 aa)). Residues 482-502 (SFDRLWTFYLLALQAMIILAF) traverse the membrane as a helical segment. The Extracellular portion of the chain corresponds to 503–521 (ERVELREILRKDVLYALSS). The helical transmembrane segment at 522–542 (IFITAAFLRFLQSVLDVILNF) threads the bilayer. Topologically, residues 543 to 559 (PGFHRWKFTDVLRNILK) are cytoplasmic. A helical transmembrane segment spans residues 560–580 (IVVSLAWCVVLPLCYAQSVSF). Over 581–601 (APGKLKQWLSFLPQVKGVPPL) the chain is Extracellular. The helical transmembrane segment at 602 to 622 (YIMAVALYLLPNVLAAIMFIF) threads the bilayer. Residues 623–658 (PMLRRWIENSDWHIFRLLLWWSQPRIYVGRGMHESQ) lie on the Cytoplasmic side of the membrane. The helical transmembrane segment at 659 to 679 (IALIKYTIFWLLLFCCKFAFS) threads the bilayer. Residues 680–719 (YFLQVKLLVKPTNAIMSIRHVKYKWHEFFPNAEHNYGAVV) are Extracellular-facing. Residues 720-740 (SLWLPVILVYFMDTQIWYAIF) traverse the membrane as a helical segment. Residues 741–1486 (STICGGVIGA…FDFFRMMSCY (746 aa)) lie on the Cytoplasmic side of the membrane. A helical membrane pass occupies residues 1487–1507 (FTTVGFYISSMIVVLTVYAFL). Residues 1508–1535 (YGRLYLSLSGVEEAIVKFAAAKGDSSLK) are Extracellular-facing. The helical transmembrane segment at 1536 to 1556 (AAMASQSVVQLGLLMTLPMVM) threads the bilayer. Residues 1557-1566 (EIGLERGFRT) are Cytoplasmic-facing. Residues 1567–1587 (ALSDLIIMQLQLAPVFFTFSL) form a helical membrane-spanning segment. Topologically, residues 1588–1630 (GTKVHYYGRTILHGGSKYRATGRGFVVKHEKFAENYRMYSRSH) are extracellular. A helical transmembrane segment spans residues 1631 to 1651 (FVKGMELMVLLICYRIYGKAA). The Cytoplasmic portion of the chain corresponds to 1652–1657 (EDSVGY). A helical membrane pass occupies residues 1658 to 1678 (ALVMGSTWFLVGSWLFAPFFF). Topologically, residues 1679–1732 (NPSGFEWQKIVDDWDDWNKWISSRGGIGVPANKSWESWWEEEQEHLLHSGFFGK) are extracellular. Residue asparagine 1710 is glycosylated (N-linked (GlcNAc...) asparagine). Residues 1733 to 1755 (FWEIFLSLRYFIYQYGIVYQLNL) form a helical membrane-spanning segment. The Cytoplasmic portion of the chain corresponds to 1756–1766 (TKESRMGKQHS). Residues 1767–1787 (IIVYGLSWLVIVAVMIVLKIV) traverse the membrane as a helical segment. At 1788–1803 (SMGRKKFSADFQLMFR) the chain is on the extracellular side. The helical transmembrane segment at 1804–1824 (LLKLFLFIGSVVIVGMLFHFL) threads the bilayer. Lysine 1825 is a topological domain (cytoplasmic). A helical membrane pass occupies residues 1826-1846 (LTVGDIMQSLLAFLPTGWALL). Residues 1847 to 1873 (QISQVARPLMKTVGMWGSVKALARGYE) are Extracellular-facing. A helical membrane pass occupies residues 1874-1894 (YIMGVVIFMPVTVLAWFPFVS). Residues 1895-1923 (EFQTRLLFNQAFSRGLQIQRILAGGKKQK) are Cytoplasmic-facing.

The protein belongs to the glycosyltransferase 48 family.

It localises to the cell membrane. It carries out the reaction [(1-&gt;3)-beta-D-glucosyl](n) + UDP-alpha-D-glucose = [(1-&gt;3)-beta-D-glucosyl](n+1) + UDP + H(+). Functionally, required for the formation of the callose wall separating the tetraspores (interstitial wall) and surrounding the pollen mother cells (peripheral wall). Required for exine formation on pollen wall. May be involved in callose synthesis during pollen tube growth. During plant growth and development, callose is found as a transitory component of the cell plate in dividing cells, is a major component of pollen mother cell walls and pollen tubes, and is found as a structural component of plasmodesmatal canals. This chain is Callose synthase 5 (CALS5), found in Arabidopsis thaliana (Mouse-ear cress).